A 582-amino-acid polypeptide reads, in one-letter code: DNA primase (582 aa).

A CHC2-type zinc finger spans residues 40–64; sequence CPFHHEKTPSFTVSQKKQFYHCFGC. Residues 259–341 form the Toprim domain; it reads EMLLVVEGYM…GRQLKFVFLP (83 aa). Residues Glu-265, Asp-309, and Asp-311 each contribute to the Mg(2+) site.

Belongs to the DnaG primase family. In terms of assembly, monomer. Interacts with DnaB. The cofactor is Zn(2+). Mg(2+) serves as cofactor.

It carries out the reaction ssDNA + n NTP = ssDNA/pppN(pN)n-1 hybrid + (n-1) diphosphate.. RNA polymerase that catalyzes the synthesis of short RNA molecules used as primers for DNA polymerase during DNA replication. The protein is DNA primase of Pasteurella multocida (strain Pm70).